A 452-amino-acid polypeptide reads, in one-letter code: GTPase Der (452 aa).

2 EngA-type G domains span residues 4–169 (PVVA…PPQD) and 177–352 (IQMA…EQHR). Residues 10–17 (GRPNVGKS), 57–61 (DTGGL), 120–123 (NKCE), 183–190 (GRPNVGKS), 230–234 (DTAGI), and 295–298 (NKWD) each bind GTP. One can recognise a KH-like domain in the interval 353–438 (RRVTTAVVNE…PVRLFWRGKQ (86 aa)).

It belongs to the TRAFAC class TrmE-Era-EngA-EngB-Septin-like GTPase superfamily. EngA (Der) GTPase family. Associates with the 50S ribosomal subunit.

In terms of biological role, GTPase that plays an essential role in the late steps of ribosome biogenesis. The chain is GTPase Der from Synechococcus sp. (strain RCC307).